The chain runs to 445 residues: Ribosome biogenesis protein YTM1 (445 aa).

The ubiquitin-like (UBL) domain stretch occupies residues V8 to R89. The sufficient for interaction with ERB1 and association with 66S pre-ribosomes stretch occupies residues S99–N445. WD repeat units follow at residues S101–Y138, G140–V178, G195–V232, S270–T310, S312–I351, G358–T398, and G409–N445.

It belongs to the WD repeat WDR12/YTM1 family. Component of the NOP7 complex, composed of ERB1, NOP7 and YTM1. The complex is held together by ERB1, which interacts with NOP7 via its N-terminal domain and with YTM1 via a high-affinity interaction between the seven-bladed beta-propeller domains of the 2 proteins. The NOP7 complex associates with the 66S pre-ribosome. Interacts (via UBL domain) with MDN1 (via VWFA/MIDAS domain).

Its subcellular location is the nucleus. It is found in the nucleolus. The protein resides in the nucleoplasm. Functionally, component of the NOP7 complex, which is required for maturation of the 25S and 5.8S ribosomal RNAs and formation of the 60S ribosome. This chain is Ribosome biogenesis protein YTM1, found in Eremothecium gossypii (strain ATCC 10895 / CBS 109.51 / FGSC 9923 / NRRL Y-1056) (Yeast).